Reading from the N-terminus, the 98-residue chain is NADH-ubiquinone oxidoreductase chain 4L (98 aa).

3 helical membrane-spanning segments follow: residues 1–21 (MSMVYFNILMAFIVSFVGLLM), 29–49 (SLLCLEGMMLSLFVMMSVTIL), and 61–81 (IILLVFAACEAALGLSLLVMV).

Belongs to the complex I subunit 4L family. In terms of assembly, core subunit of respiratory chain NADH dehydrogenase (Complex I) which is composed of 45 different subunits.

It is found in the mitochondrion inner membrane. It carries out the reaction a ubiquinone + NADH + 5 H(+)(in) = a ubiquinol + NAD(+) + 4 H(+)(out). Functionally, core subunit of the mitochondrial membrane respiratory chain NADH dehydrogenase (Complex I) which catalyzes electron transfer from NADH through the respiratory chain, using ubiquinone as an electron acceptor. Part of the enzyme membrane arm which is embedded in the lipid bilayer and involved in proton translocation. The polypeptide is NADH-ubiquinone oxidoreductase chain 4L (MT-ND4L) (Eumetopias jubatus (Steller sea lion)).